A 215-amino-acid chain; its full sequence is UPF0502 protein Ping_1905 (215 aa).

The protein belongs to the UPF0502 family.

The protein is UPF0502 protein Ping_1905 of Psychromonas ingrahamii (strain DSM 17664 / CCUG 51855 / 37).